We begin with the raw amino-acid sequence, 245 residues long: 1-(5-phosphoribosyl)-5-[(5-phosphoribosylamino)methylideneamino] imidazole-4-carboxamide isomerase (245 aa).

The active-site Proton acceptor is the D7. D129 functions as the Proton donor in the catalytic mechanism.

It belongs to the HisA/HisF family.

It localises to the cytoplasm. It catalyses the reaction 1-(5-phospho-beta-D-ribosyl)-5-[(5-phospho-beta-D-ribosylamino)methylideneamino]imidazole-4-carboxamide = 5-[(5-phospho-1-deoxy-D-ribulos-1-ylimino)methylamino]-1-(5-phospho-beta-D-ribosyl)imidazole-4-carboxamide. It participates in amino-acid biosynthesis; L-histidine biosynthesis; L-histidine from 5-phospho-alpha-D-ribose 1-diphosphate: step 4/9. This is 1-(5-phosphoribosyl)-5-[(5-phosphoribosylamino)methylideneamino] imidazole-4-carboxamide isomerase from Vibrio vulnificus (strain CMCP6).